The following is a 301-amino-acid chain: GTP cyclohydrolase FolE2 (301 aa).

The protein belongs to the GTP cyclohydrolase IV family.

It catalyses the reaction GTP + H2O = 7,8-dihydroneopterin 3'-triphosphate + formate + H(+). The protein operates within cofactor biosynthesis; 7,8-dihydroneopterin triphosphate biosynthesis; 7,8-dihydroneopterin triphosphate from GTP: step 1/1. In terms of biological role, converts GTP to 7,8-dihydroneopterin triphosphate. The sequence is that of GTP cyclohydrolase FolE2 from Pseudomonas savastanoi pv. phaseolicola (strain 1448A / Race 6) (Pseudomonas syringae pv. phaseolicola (strain 1448A / Race 6)).